A 726-amino-acid polypeptide reads, in one-letter code: A-type inclusion protein A25 homolog (726 aa).

The disordered stretch occupies residues 342-361 (TNTGIEEPHATGGDKEDQPI). Residues 347–360 (EEPHATGGDKEDQP) show a composition bias toward basic and acidic residues. Residues 426–713 (TELEEAKRKL…ERQLNDCRRN (288 aa)) are 4 X approximate tandem repeats. Tandem repeats lie at residues 612 to 634 (RELE…CTRN), 639 to 661 (QEVD…CIES), 667 to 689 (TEIS…CRGN), and 691 to 713 (TEIS…CRRN).

It belongs to the poxviridae A25 protein family. As to quaternary structure, interacts (via N-terminus) with protein A26.

It is found in the virion. Its function is as follows. Structural protein that forms a matrix surrounding the mature virion (MV) through interaction with protein A26. Presence of protein A25 in the virion structurally prevents direct virus-cell fusion mechanism. The polypeptide is A-type inclusion protein A25 homolog (Camelus).